A 387-amino-acid chain; its full sequence is MTGKLAEKLPVTMSSLLNQLPDNLYPEEIPSALNLFSGSSDSVAHYNQMATENVMDIGLTNEKPNPELSYSSSFQPAPGNKTVTYLGKFAFDSPSNWCQDNIISLMSAGILGVPPASGALSTQTSTASMVQPPQGDVEAMYPALPPYSNCGDLYSEPVSFHDPQGNPGLAYSPQDYQSAKPALDSNLFPMIPDYNLYHHPNDMGSIPEHKPFQGMDPIRVNPPPITPLETIKAFKDKQIHPGFGSLPQPPLTLKPIRPRKYPNRPSKTPLHERPHACPAEGCDRRFSRSDELTRHLRIHTGHKPFQCRICMRSFSRSDHLTTHIRTHTGEKPFACEFCGRKFARSDERKRHAKIHLKQKEKKSEKGGAPSASSAPTVSLAPVVTTCA.

The disordered stretch occupies residues 241-283; sequence PGFGSLPQPPLTLKPIRPRKYPNRPSKTPLHERPHACPAEGCD. Positions 269–283 are enriched in basic and acidic residues; sequence PLHERPHACPAEGCD. 3 consecutive C2H2-type zinc fingers follow at residues 275–299, 305–327, and 333–355; these read HACP…LRIH, FQCR…IRTH, and FACE…AKIH. The tract at residues 348 to 387 is disordered; that stretch reads RKRHAKIHLKQKEKKSEKGGAPSASSAPTVSLAPVVTTCA. The segment covering 350-360 has biased composition (basic residues); that stretch reads RHAKIHLKQKE.

This sequence belongs to the EGR C2H2-type zinc-finger protein family.

The protein resides in the nucleus. Probable transcription factor involved in muscle spindle development. The polypeptide is Early growth response protein 3 (Egr3) (Mus musculus (Mouse)).